Reading from the N-terminus, the 486-residue chain is Protein nucleotidyltransferase YdiU (486 aa).

ATP is bound by residues Gly90, Gly92, Arg93, Lys113, Asp125, Gly126, Arg176, and Arg183. The active-site Proton acceptor is Asp252. Mg(2+) contacts are provided by Asn253 and Asp262. Asp262 provides a ligand contact to ATP.

The protein belongs to the SELO family. It depends on Mg(2+) as a cofactor. Mn(2+) serves as cofactor.

The enzyme catalyses L-seryl-[protein] + ATP = 3-O-(5'-adenylyl)-L-seryl-[protein] + diphosphate. It carries out the reaction L-threonyl-[protein] + ATP = 3-O-(5'-adenylyl)-L-threonyl-[protein] + diphosphate. It catalyses the reaction L-tyrosyl-[protein] + ATP = O-(5'-adenylyl)-L-tyrosyl-[protein] + diphosphate. The catalysed reaction is L-histidyl-[protein] + UTP = N(tele)-(5'-uridylyl)-L-histidyl-[protein] + diphosphate. The enzyme catalyses L-seryl-[protein] + UTP = O-(5'-uridylyl)-L-seryl-[protein] + diphosphate. It carries out the reaction L-tyrosyl-[protein] + UTP = O-(5'-uridylyl)-L-tyrosyl-[protein] + diphosphate. Nucleotidyltransferase involved in the post-translational modification of proteins. It can catalyze the addition of adenosine monophosphate (AMP) or uridine monophosphate (UMP) to a protein, resulting in modifications known as AMPylation and UMPylation. The protein is Protein nucleotidyltransferase YdiU of Pseudomonas putida (strain W619).